We begin with the raw amino-acid sequence, 374 residues long: Peptide chain release factor 2 (374 aa).

N5-methylglutamine is present on Gln248.

Belongs to the prokaryotic/mitochondrial release factor family. Post-translationally, methylated by PrmC. Methylation increases the termination efficiency of RF2.

The protein resides in the cytoplasm. Its function is as follows. Peptide chain release factor 2 directs the termination of translation in response to the peptide chain termination codons UGA and UAA. The sequence is that of Peptide chain release factor 2 from Thermomicrobium roseum (strain ATCC 27502 / DSM 5159 / P-2).